Reading from the N-terminus, the 1114-residue chain is M-phase phosphoprotein 9 (1114 aa).

Disordered stretches follow at residues 1–55, 106–161, 183–207, 267–301, and 410–468; these read MEDF…KTGP, RPSC…DCHV, AKEP…VVQA, TSWA…WKPP, and VLEP…STIP. Over residues 24–51 the composition is skewed to polar residues; the sequence is APQSLGLSLHANRSSPHLSTNGVSSFSG. Over residues 106–119 the composition is skewed to low complexity; it reads RPSCSSSSVSEQVS. The segment covering 149–161 has biased composition (polar residues); that stretch reads QPASSTSYPDCHV. Composition is skewed to polar residues over residues 267–280 and 429–446; these read TSWA…QSKQ and HNPS…TTRA. A required for its centrosomal localization region spans residues 368 to 729; that stretch reads LSQVLTLDPG…EAQVKQAEHE (362 aa). The interval 382 to 431 is interaction with CEP97; that stretch reads KPKEHVAGIQAHGFLHALDDRISFSPDSVLEPSLSRHSDTDSSSQASHNP. Residues 574 to 733 adopt a coiled-coil conformation; it reads DRCGQLDSAL…KQAEHESMLS (160 aa). Ser710 is subject to Phosphoserine; by TTBK2. A Glycyl lysine isopeptide (Lys-Gly) (interchain with G-Cter in ubiquitin) cross-link involves residue Lys713. A Phosphoserine; by TTBK2 modification is found at Ser717. Disordered stretches follow at residues 727–755, 840–931, and 975–1002; these read EHES…TSDV, SWGT…GFSH, and EEKK…NGLK. The interaction with KIF24 stretch occupies residues 730–963; it reads SMLSLRNGAK…PVSTLQQTTA (234 aa). Residues 852–868 show a composition bias toward polar residues; the sequence is SKLVNSRQTEPSVNTGR. Residues 881-898 are compositionally biased toward low complexity; that stretch reads QTSASQRSSSLPPSSRKA. Position 926 is a phosphoserine (Ser926). Over residues 975–985 the composition is skewed to basic and acidic residues; the sequence is EEKKYSEKNSD. A coiled-coil region spans residues 1040 to 1105; sequence RTLAETERFF…GSVRMTLKKF (66 aa).

In terms of assembly, interacts with CCP110, CEP97 and KIF24. In terms of processing, TTBK2-mediated phosphorylation at Ser-710 and Ser-717, promotes its ubiquitination at Lys-713 leading to proteasomal degradation, loss of MPHOSPH9 facilitates the removal of the CP110-CEP97 complex from the mother centrioles, promoting the initiation of ciliogenesis. Phosphorylated in M (mitotic) phase. Post-translationally, ubiquitinated at Lys-713, leading to proteasomal degradation.

It localises to the cytoplasm. The protein resides in the cytoskeleton. It is found in the microtubule organizing center. Its subcellular location is the centrosome. The protein localises to the centriole. It localises to the golgi apparatus membrane. In terms of biological role, negatively regulates cilia formation by recruiting the CP110-CEP97 complex (a negative regulator of ciliogenesis) at the distal end of the mother centriole in ciliary cells. At the beginning of cilia formation, MPHOSPH9 undergoes TTBK2-mediated phosphorylation and degradation via the ubiquitin-proteasome system and removes itself and the CP110-CEP97 complex from the distal end of the mother centriole, which subsequently promotes cilia formation. This chain is M-phase phosphoprotein 9 (Mphosph9), found in Mus musculus (Mouse).